The sequence spans 569 residues: Sulfite reductase [NADPH] hemoprotein beta-component (569 aa).

The [4Fe-4S] cluster site is built by C434, C440, C479, and C483. A siroheme-binding site is contributed by C483.

This sequence belongs to the nitrite and sulfite reductase 4Fe-4S domain family. As to quaternary structure, alpha(8)-beta(8). The alpha component is a flavoprotein, the beta component is a hemoprotein. Siroheme is required as a cofactor. Requires [4Fe-4S] cluster as cofactor.

The catalysed reaction is hydrogen sulfide + 3 NADP(+) + 3 H2O = sulfite + 3 NADPH + 4 H(+). It participates in sulfur metabolism; hydrogen sulfide biosynthesis; hydrogen sulfide from sulfite (NADPH route): step 1/1. Functionally, component of the sulfite reductase complex that catalyzes the 6-electron reduction of sulfite to sulfide. This is one of several activities required for the biosynthesis of L-cysteine from sulfate. This Staphylococcus carnosus (strain TM300) protein is Sulfite reductase [NADPH] hemoprotein beta-component.